A 319-amino-acid polypeptide reads, in one-letter code: Beta-ketoacyl-[acyl-carrier-protein] synthase III (319 aa).

Active-site residues include cysteine 112 and histidine 246. The interval 247 to 251 is ACP-binding; it reads QANKR. Residue asparagine 276 is part of the active site.

The protein belongs to the thiolase-like superfamily. FabH family. Homodimer.

It is found in the cytoplasm. The catalysed reaction is malonyl-[ACP] + acetyl-CoA + H(+) = 3-oxobutanoyl-[ACP] + CO2 + CoA. The protein operates within lipid metabolism; fatty acid biosynthesis. In terms of biological role, catalyzes the condensation reaction of fatty acid synthesis by the addition to an acyl acceptor of two carbons from malonyl-ACP. Catalyzes the first condensation reaction which initiates fatty acid synthesis and may therefore play a role in governing the total rate of fatty acid production. Possesses both acetoacetyl-ACP synthase and acetyl transacylase activities. Its substrate specificity determines the biosynthesis of branched-chain and/or straight-chain of fatty acids. The polypeptide is Beta-ketoacyl-[acyl-carrier-protein] synthase III (Psychromonas ingrahamii (strain DSM 17664 / CCUG 51855 / 37)).